A 317-amino-acid chain; its full sequence is Ribosomal RNA small subunit methyltransferase H (317 aa).

Residues Gly-39–His-41, Asp-59, Phe-83, Asp-104, and Gln-111 each bind S-adenosyl-L-methionine.

Belongs to the methyltransferase superfamily. RsmH family.

It is found in the cytoplasm. It catalyses the reaction cytidine(1402) in 16S rRNA + S-adenosyl-L-methionine = N(4)-methylcytidine(1402) in 16S rRNA + S-adenosyl-L-homocysteine + H(+). Functionally, specifically methylates the N4 position of cytidine in position 1402 (C1402) of 16S rRNA. This chain is Ribosomal RNA small subunit methyltransferase H, found in Paraburkholderia xenovorans (strain LB400).